Here is a 141-residue protein sequence, read N- to C-terminus: ATP synthase F(0) complex subunit C2, mitochondrial (141 aa).

The N-terminal 66 residues, 1–66, are a transit peptide targeting the mitochondrion; that stretch reads MYACSKFVST…RSFQTSAISR (66 aa). A helical transmembrane segment spans residues 82 to 102; the sequence is VGVAGSGAGIGTVFGSLIIGY. Lys-109 is modified (N6,N6,N6-trimethyllysine). Residues 117–137 form a helical membrane-spanning segment; sequence ILGFALSEAMGLFCLMVAFLI.

It belongs to the ATPase C chain family. As to quaternary structure, F-type ATPases have 2 components, CF(1) - the catalytic core - and CF(0) - the membrane proton channel. CF(1) has five subunits: alpha(3), beta(3), gamma(1), delta(1), epsilon(1). CF(0) has three main subunits: a, b and c. Interacts with DNAJC30; interaction is direct. Post-translationally, trimethylated by ATPSCKMT at Lys-109. Methylation is required for proper incorporation of the C subunit into the ATP synthase complex and mitochondrial respiration.

The protein localises to the mitochondrion membrane. Functionally, mitochondrial membrane ATP synthase (F(1)F(0) ATP synthase or Complex V) produces ATP from ADP in the presence of a proton gradient across the membrane which is generated by electron transport complexes of the respiratory chain. F-type ATPases consist of two structural domains, F(1) - containing the extramembraneous catalytic core and F(0) - containing the membrane proton channel, linked together by a central stalk and a peripheral stalk. During catalysis, ATP synthesis in the catalytic domain of F(1) is coupled via a rotary mechanism of the central stalk subunits to proton translocation. Part of the complex F(0) domain. A homomeric c-ring of probably 10 subunits is part of the complex rotary element. In Rattus norvegicus (Rat), this protein is ATP synthase F(0) complex subunit C2, mitochondrial.